We begin with the raw amino-acid sequence, 578 residues long: Tetratricopeptide repeat protein 39A (578 aa).

3 TPR repeats span residues 280–313, 470–503, and 511–544; these read AIFL…QQHW, CLVK…EKKI, and PNAL…YKNY.

The protein belongs to the TTC39 family.

In Mus musculus (Mouse), this protein is Tetratricopeptide repeat protein 39A (Ttc39a).